Consider the following 445-residue polypeptide: Exodeoxyribonuclease 7 large subunit (445 aa).

Belongs to the XseA family. In terms of assembly, heterooligomer composed of large and small subunits.

The protein resides in the cytoplasm. It carries out the reaction Exonucleolytic cleavage in either 5'- to 3'- or 3'- to 5'-direction to yield nucleoside 5'-phosphates.. In terms of biological role, bidirectionally degrades single-stranded DNA into large acid-insoluble oligonucleotides, which are then degraded further into small acid-soluble oligonucleotides. The protein is Exodeoxyribonuclease 7 large subunit of Geotalea daltonii (strain DSM 22248 / JCM 15807 / FRC-32) (Geobacter daltonii).